Here is a 283-residue protein sequence, read N- to C-terminus: Calpastatin (283 aa).

Residues Met-1–Met-15 are compositionally biased toward polar residues. Disordered regions lie at residues Met-1–Met-186 and Asn-212–Lys-283. Residues Pro-21–Ala-30 are compositionally biased toward basic residues. Lys-32 participates in a covalent cross-link: Glycyl lysine isopeptide (Lys-Gly) (interchain with G-Cter in SUMO2). Basic and acidic residues predominate over residues Val-46–Ser-65. The residue at position 50 (Lys-50) is an N6-acetyllysine. The residue at position 87 (Ser-87) is a Phosphoserine. Low complexity predominate over residues Val-107–Gly-122. The residue at position 133 (Ser-133) is a Phosphoserine. Residue Thr-135 is modified to Phosphothreonine. Residues Ile-170–Ser-222 form an Inhibitory domain 1 repeat. Phosphoserine occurs at positions 222 and 243. Residues Lys-249–Glu-258 are compositionally biased toward basic and acidic residues.

The protein belongs to the protease inhibitor I27 (calpastatin) family.

Functionally, specific inhibition of calpain (calcium-dependent cysteine protease). Plays a key role in postmortem tenderization of meat and have been proposed to be involved in muscle protein degradation in living tissue. The chain is Calpastatin (CAST) from Chlorocebus aethiops (Green monkey).